We begin with the raw amino-acid sequence, 494 residues long: Glutamyl-tRNA(Gln) amidotransferase subunit A (494 aa).

Active-site charge relay system residues include K79 and S159. The Acyl-ester intermediate role is filled by S183.

It belongs to the amidase family. GatA subfamily. Heterotrimer of A, B and C subunits.

The catalysed reaction is L-glutamyl-tRNA(Gln) + L-glutamine + ATP + H2O = L-glutaminyl-tRNA(Gln) + L-glutamate + ADP + phosphate + H(+). In terms of biological role, allows the formation of correctly charged Gln-tRNA(Gln) through the transamidation of misacylated Glu-tRNA(Gln) in organisms which lack glutaminyl-tRNA synthetase. The reaction takes place in the presence of glutamine and ATP through an activated gamma-phospho-Glu-tRNA(Gln). This Bartonella tribocorum (strain CIP 105476 / IBS 506) protein is Glutamyl-tRNA(Gln) amidotransferase subunit A.